A 511-amino-acid polypeptide reads, in one-letter code: Exodeoxyribonuclease 7 large subunit (511 aa).

It belongs to the XseA family. As to quaternary structure, heterooligomer composed of large and small subunits.

It localises to the cytoplasm. The enzyme catalyses Exonucleolytic cleavage in either 5'- to 3'- or 3'- to 5'-direction to yield nucleoside 5'-phosphates.. Functionally, bidirectionally degrades single-stranded DNA into large acid-insoluble oligonucleotides, which are then degraded further into small acid-soluble oligonucleotides. This is Exodeoxyribonuclease 7 large subunit from Brucella abortus (strain S19).